We begin with the raw amino-acid sequence, 550 residues long: Arginine--tRNA ligase (550 aa).

A 'HIGH' region motif is present at residues 122–132 (GNPTGPLHLAH).

It belongs to the class-I aminoacyl-tRNA synthetase family. Monomer.

The protein resides in the cytoplasm. It catalyses the reaction tRNA(Arg) + L-arginine + ATP = L-arginyl-tRNA(Arg) + AMP + diphosphate. The polypeptide is Arginine--tRNA ligase (Tropheryma whipplei (strain TW08/27) (Whipple's bacillus)).